Reading from the N-terminus, the 2051-residue chain is MDAYSTRPLTLSHGSLEHVLLVPTASFFIASQLQEQFNKILPEPTEGFAADDEPTTPAELVGKFLGYVSSLVEPSKVGQFDQVLNLCLTEFENCYLEGNDIHALAAKLLQENDTTLVKTKELIKNYITARIMAKRPFDKKSNSALFRAVGEGNAQLVAIFGGQGNTDDYFEELRDLYQTYHVLVGDLIKFSAETLSELIRTTLDAEKVFTQGLNILEWLENPSNTPDKDYLLSIPISCPLIGVIQLAHYVVTAKLLGFTPGELRSYLKGATGHSQGLVTAVAIAETDSWESFFVSVRKAITVLFFIGVRCYEAYPNTSLPPSILEDSLENNEGVPSPMLSISNLTQEQVQDYVNKTNSHLPAGKQVEISLVNGAKNLVVSGPPQSLYGLNLTLRKAKAPSGLDQSRIPFSERKLKFSNRFLPVASPFHSHLLVPASDLINKDLVKNNVSFNAKDIQIPVYDTFDGSDLRVLSGSISERIVDCIIRLPVKWETTTQFKATHILDFGPGGASGLGVLTHRNKDGTGVRVIVAGTLDINPDDDYGFKQEIFDVTSNGLKKNPNWLEEYHPKLIKNKSGKIFVETKFSKLIGRPPLLVPGMTPCTVSPDFVAATTNAGYTIELAGGGYFSAAGMTAAIDSVVSQIEKGSTFGINLIYVNPFMLQWGIPLIKELRSKGYPIQFLTIGAGVPSLEVASEYIETLGLKYLGLKPGSIDAISQVINIAKAHPNFPIALQWTGGRGGGHHSFEDAHTPMLQMYSKIRRHPNIMLIFGSGFGSADDTYPYLTGEWSTKFDYPPMPFDGFLFGSRVMIAKEVKTSPDAKKCIAACTGVPDDKWEQTYKKPTGGIVTVRSEMGEPIHKIATRGVMLWKEFDETIFNLPKNKLVPTLEAKRDYIISRLNADFQKPWFATVNGQARDLATMTYEEVAKRLVELMFIRSTNSWFDVTWRTFTGDFLRRVEERFTKSKTLSLIQSYSLLDKPDEAIEKVFNAYPAAREQFLNAQDIDHFLSMCQNPMQKPVPFVPVLDRRFEIFFKKDSLWQSEHLEAVVDQDVQRTCILHGPVAAQFTKVIDEPIKSIMDGIHDGHIKKLLHQYYGDDESKIPAVEYFGGESPVDVQSQVDSSSVSEDSAVFKATSSTDEESWFKALAGSEINWRHASFLCSFITQDKMFVSNPIRKVFKPSQGMVVEISNGNTSSKTVVTLSEPVQGELKPTVILKLLKENIIQMEMIENRTMDGKPVSLPLLYNFNPDNGFAPISEVMEDRNQRIKEMYWKLWIDEPFNLDFDPRDVIKGKDFEITAKEVYDFTHAVGNNCEDFVSRPDRTMLAPMDFAIVVGWRAIIKAIFPNTVDGDLLKLVHLSNGYKMIPGAKPLQVGDVVSTTAVIESVVNQPTGKIVDVVGTLSRNGKPVMEVTSSFFYRGNYTDFENTFQKTVEPVYQMHIKTSKDIAVLRSKEWFQLDDEDFDLLNKTLTFETETEVTFKNANIFSSVKCFGPIKVELPTKETVEIGIVDYEAGASHGNPVVDFLKRNGSTLEQKVNLENPIPIAVLDSYTPSTNEPYARVSGDLNPIHVSRHFASYANLPGTITHGMFSSASVRALIENWAADSVSSRVRGYTCQFVDMVLPNTALKTSIQHVGMINGRKLIKFETRNEDDVVVLTGEAEIEQPVTTFVFTGQGSQEQGMGMDLYKTSKAAQDVWNRADNHFKDTYGFSILDIVINNPVNLTIHFGGEKGKRIRENYSAMIFETIVDGKLKTEKIFKEINEHSTSYTFRSEKGLLSATQFTQPALTLMEKAAFEDLKSKGLIPADATFAGHSLGEYAALASLADVMSIESLVEVVFYRGMTMQVAVPRDELGRSNYGMIAINPGRVAASFSQEALQYVVERVGKRTGWLVEIVNYNVENQQYVAAGDLRALDTVTNVLNFIKLQKIDIIELQKSLSLEEVEGHLFEIIDEASKKSAVKPRPLKLERGFACIPLVGISVPFHSTYLMNGVKPFKSFLKKNIIKENVKVARLAGKYIPNLTAKPFQVTKEYFQDVYDLTGSEPIKEIIDNWEKYEQS.

The residue at position 1 (M1) is an N-acetylmethionine. Residues M1 to L468 form an acetyltransferase region. S274 serves as the catalytic For acetyltransferase activity. The interval V480–F868 is enoyl reductase. Phosphothreonine is present on T733. S1121 is subject to Phosphoserine. The interval G1144–I1626 is dehydratase. K1364 participates in a covalent cross-link: Glycyl lysine isopeptide (Lys-Gly) (interchain with G-Cter in ubiquitin). Residues N1523–V1648 form the MaoC-like domain. The segment at Q1627 to D1845 is malonyl/palmitoyl transferase. S1808 acts as the For malonyltransferase activity in catalysis.

This sequence belongs to the fungal fatty acid synthetase subunit beta family. As to quaternary structure, [Alpha(6)beta(6)] hexamers of two multifunctional subunits (alpha and beta).

It catalyses the reaction acetyl-CoA + n malonyl-CoA + 2n NADPH + 4n H(+) = a long-chain-acyl-CoA + n CoA + n CO2 + 2n NADP(+).. It carries out the reaction holo-[ACP] + acetyl-CoA = acetyl-[ACP] + CoA. The enzyme catalyses holo-[ACP] + malonyl-CoA = malonyl-[ACP] + CoA. The catalysed reaction is a (3R)-hydroxyacyl-[ACP] = a (2E)-enoyl-[ACP] + H2O. It catalyses the reaction a 2,3-saturated acyl-[ACP] + NAD(+) = a (2E)-enoyl-[ACP] + NADH + H(+). It carries out the reaction (9Z)-octadecenoyl-[ACP] + H2O = (9Z)-octadecenoate + holo-[ACP] + H(+). Fatty acid synthetase catalyzes the formation of long-chain fatty acids from acetyl-CoA, malonyl-CoA and NADPH. The beta subunit contains domains for: [acyl-carrier-protein] acetyltransferase and malonyltransferase, S-acyl fatty acid synthase thioesterase, enoyl-[acyl-carrier-protein] reductase, and 3-hydroxypalmitoyl-[acyl-carrier-protein] dehydratase. The chain is Fatty acid synthase subunit beta (FAS1) from Saccharomyces cerevisiae (strain ATCC 204508 / S288c) (Baker's yeast).